A 304-amino-acid polypeptide reads, in one-letter code: UDP-3-O-acyl-N-acetylglucosamine deacetylase (304 aa).

Residues His78, His237, and Asp241 each coordinate Zn(2+). His264 functions as the Proton donor in the catalytic mechanism.

Belongs to the LpxC family. The cofactor is Zn(2+).

The catalysed reaction is a UDP-3-O-[(3R)-3-hydroxyacyl]-N-acetyl-alpha-D-glucosamine + H2O = a UDP-3-O-[(3R)-3-hydroxyacyl]-alpha-D-glucosamine + acetate. The protein operates within glycolipid biosynthesis; lipid IV(A) biosynthesis; lipid IV(A) from (3R)-3-hydroxytetradecanoyl-[acyl-carrier-protein] and UDP-N-acetyl-alpha-D-glucosamine: step 2/6. Functionally, catalyzes the hydrolysis of UDP-3-O-myristoyl-N-acetylglucosamine to form UDP-3-O-myristoylglucosamine and acetate, the committed step in lipid A biosynthesis. In Nitrosococcus oceani (strain ATCC 19707 / BCRC 17464 / JCM 30415 / NCIMB 11848 / C-107), this protein is UDP-3-O-acyl-N-acetylglucosamine deacetylase.